The sequence spans 352 residues: NAD-dependent protein deacetylase sirtuin-2 (352 aa).

S16 is modified (phosphoserine). In terms of domain architecture, Deacetylase sirtuin-type spans 20 to 301 (RLLDELTLEG…LALAELLGWK (282 aa)). Residues 48-52 (AGIST) and 58-60 (DFR) each bind NAD(+). S63 is modified (phosphoserine). An NAD(+)-binding site is contributed by 130 to 133 (QNID). H150 acts as the Proton acceptor in catalysis. Zn(2+) is bound by residues C158 and C163. A Phosphoserine modification is found at S170. 2 residues coordinate Zn(2+): C184 and C187. NAD(+) is bound by residues 225–226 (TS), 249–251 (NKE), and C287. A disordered region spans residues 314-352 (SIDAQSGAGVPNPSTSASPKKSPPPAKDEARTTEREKPQ). The span at 324–333 (PNPSTSASPK) shows a compositional bias: low complexity. Phosphoserine occurs at positions 331 and 335. Over residues 339-352 (AKDEARTTEREKPQ) the composition is skewed to basic and acidic residues.

It belongs to the sirtuin family. Class I subfamily. In terms of assembly, interacts with CDC20, FOXO3 and FZR1. Associates with microtubules in primary cortical mature neurons. Homotrimer. Interacts (via both phosphorylated, unphosphorylated, active or inactive forms) with HDAC6; the interaction is necessary for the complex to interact with alpha-tubulin, suggesting that these proteins belong to a large complex that deacetylates the cytoskeleton. Interacts with FOXO1; the interaction is disrupted upon serum-starvation or oxidative stress, leading to increased level of acetylated FOXO1 and induction of autophagy. Interacts with RELA; the interaction occurs in the cytoplasm and is increased in a TNF-alpha-dependent manner. Interacts with HOXA10; the interaction is direct. Interacts with YWHAB and YWHAG; the interactions occur in a AKT-dependent manner and increase SIRT2-dependent TP53 deacetylation. Interacts with MAPK1/ERK2 and MAPK3/ERK1; the interactions increase SIRT2 stability and deacetylation activity. Interacts (phosphorylated form) with KMT5A isoform 2; the interaction is direct, stimulates KMT5A-mediated methyltransferase activity on histone at 'Lys-20' (H4K20me1) and is increased in a H(2)O(2)-induced oxidative stress-dependent manner. Interacts with G6PD; the interaction is enhanced by H(2)O(2) treatment. Interacts with a G1/S-specific cyclin E-CDK2 complex. Interacts with AURKA, CDK5R1 (p35 form) and CDK5 and HIF1A. Interacts with the tRNA ligase SARS1; recruited to the VEGFA promoter via interaction with SARS1. Interacts with BEX4; negatively regulates alpha-tubulin deacetylation by SIRT2. Interacts with MORN3; the interaction enhances the ubiquitination of p53/TP53. The cofactor is Zn(2+). Post-translationally, phosphorylated at phosphoserine and phosphothreonine. Phosphorylated at Ser-331 by a mitotic kinase CDK1/cyclin B at the G2/M transition; phosphorylation regulates the delay in cell-cycle progression. Phosphorylated at Ser-331 by a mitotic kinase G1/S-specific cyclin E/Cdk2 complex; phosphorylation inactivates SIRT2-mediated alpha-tubulin deacetylation and thereby negatively regulates cell adhesion, cell migration and neurite outgrowth during neuronal differentiation. Phosphorylated by cyclin A/Cdk2 and p35-Cdk5 complexes and to a lesser extent by the cyclin D3/Cdk4 and cyclin B/Cdk1, in vitro. Dephosphorylated at Ser-331 by CDC14A and CDC14B around early anaphase. In terms of processing, acetylated by EP300; acetylation leads both to the decreased of SIRT2-mediated alpha-tubulin deacetylase activity and SIRT2-mediated down-regulation of TP53 transcriptional activity. Ubiquitinated.

Its subcellular location is the nucleus. It is found in the cytoplasm. It localises to the perinuclear region. The protein localises to the cytoskeleton. The protein resides in the microtubule organizing center. Its subcellular location is the centrosome. It is found in the centriole. It localises to the spindle. The protein localises to the midbody. The protein resides in the chromosome. Its subcellular location is the perikaryon. It is found in the cell projection. It localises to the growth cone. The protein localises to the myelin membrane. It carries out the reaction N(6)-acetyl-L-lysyl-[protein] + NAD(+) + H2O = 2''-O-acetyl-ADP-D-ribose + nicotinamide + L-lysyl-[protein]. The enzyme catalyses N(6)-tetradecanoyl-L-lysyl-[protein] + NAD(+) + H2O = 2''-O-tetradecanoyl-ADP-D-ribose + nicotinamide + L-lysyl-[protein]. It catalyses the reaction N(6)-hexadecanoyl-L-lysyl-[protein] + NAD(+) + H2O = 2''-O-hexadecanoyl-ADP-D-ribose + nicotinamide + L-lysyl-[protein]. Inhibited by Sirtinol, A3 and M15 small molecules. Inhibited by nicotinamide. Inhibited by a macrocyclic peptide inhibitor S2iL5. Inhibited by EP300-induced acetylation. Its function is as follows. NAD-dependent protein deacetylase, which deacetylates internal lysines on histone and alpha-tubulin as well as many other proteins such as key transcription factors. Participates in the modulation of multiple and diverse biological processes such as cell cycle control, genomic integrity, microtubule dynamics, cell differentiation, metabolic networks, and autophagy. Plays a major role in the control of cell cycle progression and genomic stability. Functions in the antephase checkpoint preventing precocious mitotic entry in response to microtubule stress agents, and hence allowing proper inheritance of chromosomes. Positively regulates the anaphase promoting complex/cyclosome (APC/C) ubiquitin ligase complex activity by deacetylating CDC20 and FZR1, then allowing progression through mitosis. Associates both with chromatin at transcriptional start sites (TSSs) and enhancers of active genes. Plays a role in cell cycle and chromatin compaction through epigenetic modulation of the regulation of histone H4 'Lys-20' methylation (H4K20me1) during early mitosis. Specifically deacetylates histone H4 at 'Lys-16' (H4K16ac) between the G2/M transition and metaphase enabling H4K20me1 deposition by KMT5A leading to ulterior levels of H4K20me2 and H4K20me3 deposition throughout cell cycle, and mitotic S-phase progression. Deacetylates KMT5A modulating KMT5A chromatin localization during the mitotic stress response. Also deacetylates histone H3 at 'Lys-57' (H3K56ac) during the mitotic G2/M transition. During oocyte meiosis progression, may deacetylate histone H4 at 'Lys-16' (H4K16ac) and alpha-tubulin, regulating spindle assembly and chromosome alignment by influencing microtubule dynamics and kinetochore function. Deacetylates histone H4 at 'Lys-16' (H4K16ac) at the VEGFA promoter and thereby contributes to regulate expression of VEGFA, a key regulator of angiogenesis. Deacetylates alpha-tubulin at 'Lys-40' and hence controls neuronal motility, oligodendroglial cell arbor projection processes and proliferation of non-neuronal cells. Phosphorylation at Ser-368 by a G1/S-specific cyclin E-CDK2 complex inactivates SIRT2-mediated alpha-tubulin deacetylation, negatively regulating cell adhesion, cell migration and neurite outgrowth during neuronal differentiation. Deacetylates PARD3 and participates in the regulation of Schwann cell peripheral myelination formation during early postnatal development and during postinjury remyelination. Involved in several cellular metabolic pathways. Plays a role in the regulation of blood glucose homeostasis by deacetylating and stabilizing phosphoenolpyruvate carboxykinase PCK1 activity in response to low nutrient availability. Acts as a key regulator in the pentose phosphate pathway (PPP) by deacetylating and activating the glucose-6-phosphate G6PD enzyme, and therefore, stimulates the production of cytosolic NADPH to counteract oxidative damage. Maintains energy homeostasis in response to nutrient deprivation as well as energy expenditure by inhibiting adipogenesis and promoting lipolysis. Attenuates adipocyte differentiation by deacetylating and promoting FOXO1 interaction to PPARG and subsequent repression of PPARG-dependent transcriptional activity. Plays a role in the regulation of lysosome-mediated degradation of protein aggregates by autophagy in neuronal cells. Deacetylates FOXO1 in response to oxidative stress or serum deprivation, thereby negatively regulating FOXO1-mediated autophagy. Deacetylates a broad range of transcription factors and co-regulators regulating target gene expression. Deacetylates transcriptional factor FOXO3 stimulating the ubiquitin ligase SCF(SKP2)-mediated FOXO3 ubiquitination and degradation. Deacetylates HIF1A and therefore promotes HIF1A degradation and inhibition of HIF1A transcriptional activity in tumor cells in response to hypoxia. Deacetylates RELA in the cytoplasm inhibiting NF-kappaB-dependent transcription activation upon TNF-alpha stimulation. Inhibits transcriptional activation by deacetylating p53/TP53 and EP300. Also deacetylates EIF5A. Functions as a negative regulator on oxidative stress-tolerance in response to anoxia-reoxygenation conditions. Plays a role as tumor suppressor. In addition to protein deacetylase activity, also has activity toward long-chain fatty acyl groups and mediates protein-lysine demyristoylation and depalmitoylation of target proteins, such as ARF6 and KRAS, thereby regulating their association with membranes. The protein is NAD-dependent protein deacetylase sirtuin-2 (SIRT2) of Pongo abelii (Sumatran orangutan).